The following is a 451-amino-acid chain: Phosphoglucosamine mutase (451 aa).

Catalysis depends on Ser-101, which acts as the Phosphoserine intermediate. Ser-101, Asp-240, Asp-242, and Asp-244 together coordinate Mg(2+). Residue Ser-101 is modified to Phosphoserine.

It belongs to the phosphohexose mutase family. Requires Mg(2+) as cofactor. Activated by phosphorylation.

The enzyme catalyses alpha-D-glucosamine 1-phosphate = D-glucosamine 6-phosphate. Catalyzes the conversion of glucosamine-6-phosphate to glucosamine-1-phosphate. The sequence is that of Phosphoglucosamine mutase from Streptococcus pyogenes serotype M12 (strain MGAS2096).